We begin with the raw amino-acid sequence, 107 residues long: Integration host factor subunit alpha (107 aa).

It belongs to the bacterial histone-like protein family. In terms of assembly, heterodimer of an alpha and a beta chain.

This protein is one of the two subunits of integration host factor, a specific DNA-binding protein that functions in genetic recombination as well as in transcriptional and translational control. The sequence is that of Integration host factor subunit alpha from Brucella suis (strain ATCC 23445 / NCTC 10510).